The following is a 429-amino-acid chain: Adenylosuccinate synthetase (429 aa).

Residues Gly12–Lys18 and Gly40–Thr42 contribute to the GTP site. Asp13 acts as the Proton acceptor in catalysis. Residues Asp13 and Gly40 each coordinate Mg(2+). Residues Asp13–Lys16, Asn38–His41, Thr128, Arg142, Gln223, Thr238, and Arg302 each bind IMP. The Proton donor role is filled by His41. Residue Thr298 to Arg304 participates in substrate binding. GTP-binding positions include Arg304, Leu330 to Asp332, and Ser412 to Gly414.

Belongs to the adenylosuccinate synthetase family. As to quaternary structure, homodimer. The cofactor is Mg(2+).

It localises to the cytoplasm. The enzyme catalyses IMP + L-aspartate + GTP = N(6)-(1,2-dicarboxyethyl)-AMP + GDP + phosphate + 2 H(+). It participates in purine metabolism; AMP biosynthesis via de novo pathway; AMP from IMP: step 1/2. Its function is as follows. Plays an important role in the de novo pathway of purine nucleotide biosynthesis. Catalyzes the first committed step in the biosynthesis of AMP from IMP. The protein is Adenylosuccinate synthetase of Lactobacillus acidophilus (strain ATCC 700396 / NCK56 / N2 / NCFM).